Here is a 320-residue protein sequence, read N- to C-terminus: tRNA N6-adenosine threonylcarbamoyltransferase (320 aa).

2 residues coordinate Fe cation: His-114 and His-118. Substrate is bound by residues 136 to 140 (VVSGG), Asp-169, Gly-182, Asp-186, and Asn-273. Fe cation is bound at residue Asp-297.

Belongs to the KAE1 / TsaD family. Requires Fe(2+) as cofactor.

The protein localises to the cytoplasm. The catalysed reaction is L-threonylcarbamoyladenylate + adenosine(37) in tRNA = N(6)-L-threonylcarbamoyladenosine(37) in tRNA + AMP + H(+). Required for the formation of a threonylcarbamoyl group on adenosine at position 37 (t(6)A37) in tRNAs that read codons beginning with adenine. Is involved in the transfer of the threonylcarbamoyl moiety of threonylcarbamoyl-AMP (TC-AMP) to the N6 group of A37, together with TsaE and TsaB. TsaD likely plays a direct catalytic role in this reaction. In Ureaplasma parvum serovar 3 (strain ATCC 27815 / 27 / NCTC 11736), this protein is tRNA N6-adenosine threonylcarbamoyltransferase.